The following is a 123-amino-acid chain: MPTIQQLIRKPRQPKVQRSKSQHLQSCPQKRGVCTRVYTTTPKKPNSAMRKVAKVRLTNGFEVISYIPGEKHNLQEHSVVLIRGGRVKDLPGVRYHILRGVLDTQGVKDRRQRRSKYGAKRPK.

Positions 1-30 (MPTIQQLIRKPRQPKVQRSKSQHLQSCPQK) are disordered. Residues 9-21 (RKPRQPKVQRSKS) show a composition bias toward basic residues. Aspartate 89 is subject to 3-methylthioaspartic acid.

The protein belongs to the universal ribosomal protein uS12 family. As to quaternary structure, part of the 30S ribosomal subunit. Contacts proteins S8 and S17. May interact with IF1 in the 30S initiation complex.

In terms of biological role, with S4 and S5 plays an important role in translational accuracy. Interacts with and stabilizes bases of the 16S rRNA that are involved in tRNA selection in the A site and with the mRNA backbone. Located at the interface of the 30S and 50S subunits, it traverses the body of the 30S subunit contacting proteins on the other side and probably holding the rRNA structure together. The combined cluster of proteins S8, S12 and S17 appears to hold together the shoulder and platform of the 30S subunit. The polypeptide is Small ribosomal subunit protein uS12 (Paracoccus denitrificans (strain Pd 1222)).